Consider the following 165-residue polypeptide: Peptide deformylase (165 aa).

The Fe cation site is built by C93 and H135. E136 is a catalytic residue. H139 contacts Fe cation.

It belongs to the polypeptide deformylase family. It depends on Fe(2+) as a cofactor.

It catalyses the reaction N-terminal N-formyl-L-methionyl-[peptide] + H2O = N-terminal L-methionyl-[peptide] + formate. Functionally, removes the formyl group from the N-terminal Met of newly synthesized proteins. Requires at least a dipeptide for an efficient rate of reaction. N-terminal L-methionine is a prerequisite for activity but the enzyme has broad specificity at other positions. This Thermodesulfovibrio yellowstonii (strain ATCC 51303 / DSM 11347 / YP87) protein is Peptide deformylase.